Reading from the N-terminus, the 68-residue chain is Large ribosomal subunit protein uL29 (68 aa).

It belongs to the universal ribosomal protein uL29 family.

The protein is Large ribosomal subunit protein uL29 of Chloroflexus aurantiacus (strain ATCC 29364 / DSM 637 / Y-400-fl).